The following is a 494-amino-acid chain: NAD(P)H-quinone oxidoreductase subunit 2 B, chloroplastic (494 aa).

13 helical membrane-spanning segments follow: residues L6–L26, T39–F59, I81–I101, M106–C126, L131–Y151, L166–L186, I211–F231, W277–I297, M305–D325, Y336–L356, A377–F397, L413–I433, and M468–I488.

Belongs to the complex I subunit 2 family. In terms of assembly, NDH is composed of at least 16 different subunits, 5 of which are encoded in the nucleus.

Its subcellular location is the plastid. It localises to the chloroplast thylakoid membrane. It carries out the reaction a plastoquinone + NADH + (n+1) H(+)(in) = a plastoquinol + NAD(+) + n H(+)(out). The enzyme catalyses a plastoquinone + NADPH + (n+1) H(+)(in) = a plastoquinol + NADP(+) + n H(+)(out). Its function is as follows. NDH shuttles electrons from NAD(P)H:plastoquinone, via FMN and iron-sulfur (Fe-S) centers, to quinones in the photosynthetic chain and possibly in a chloroplast respiratory chain. The immediate electron acceptor for the enzyme in this species is believed to be plastoquinone. Couples the redox reaction to proton translocation, and thus conserves the redox energy in a proton gradient. The protein is NAD(P)H-quinone oxidoreductase subunit 2 B, chloroplastic of Cycas taitungensis (Prince sago).